The chain runs to 247 residues: Granulin (247 aa).

This sequence belongs to the polyhedrin family.

Functionally, component of the virus occlusion bodies, which are large proteinaceous structures, that protect the virus from the outside environment for extended periods until they are ingested by insect larvae. This Pieris brassicae granulosis virus (PbGV) protein is Granulin.